A 341-amino-acid polypeptide reads, in one-letter code: UDP-3-O-(3-hydroxymyristoyl)glucosamine N-acyltransferase (341 aa).

The Proton acceptor role is filled by His-239.

The protein belongs to the transferase hexapeptide repeat family. LpxD subfamily. Homotrimer.

The catalysed reaction is a UDP-3-O-[(3R)-3-hydroxyacyl]-alpha-D-glucosamine + a (3R)-hydroxyacyl-[ACP] = a UDP-2-N,3-O-bis[(3R)-3-hydroxyacyl]-alpha-D-glucosamine + holo-[ACP] + H(+). It carries out the reaction UDP-3-O-[(3R)-3-hydroxytetradecanoyl]-alpha-D-glucosamine + (3R)-hydroxytetradecanoyl-[ACP] = UDP-2-N,3-O-bis[(3R)-3-hydroxytetradecanoyl]-alpha-D-glucosamine + holo-[ACP] + H(+). It functions in the pathway glycolipid biosynthesis; lipid IV(A) biosynthesis; lipid IV(A) from (3R)-3-hydroxytetradecanoyl-[acyl-carrier-protein] and UDP-N-acetyl-alpha-D-glucosamine: step 3/6. Its function is as follows. Catalyzes the N-acylation of UDP-3-O-(hydroxytetradecanoyl)glucosamine using 3-hydroxytetradecanoyl-ACP as the acyl donor. Is involved in the biosynthesis of lipid A, a phosphorylated glycolipid that anchors the lipopolysaccharide to the outer membrane of the cell. This chain is UDP-3-O-(3-hydroxymyristoyl)glucosamine N-acyltransferase, found in Salmonella choleraesuis (strain SC-B67).